We begin with the raw amino-acid sequence, 257 residues long: Hydroxyacylglutathione hydrolase (257 aa).

His-54, His-56, Asp-58, His-59, His-113, Asp-137, and His-175 together coordinate Zn(2+).

Belongs to the metallo-beta-lactamase superfamily. Glyoxalase II family. As to quaternary structure, monomer. Zn(2+) is required as a cofactor.

It carries out the reaction an S-(2-hydroxyacyl)glutathione + H2O = a 2-hydroxy carboxylate + glutathione + H(+). Its pathway is secondary metabolite metabolism; methylglyoxal degradation; (R)-lactate from methylglyoxal: step 2/2. Functionally, thiolesterase that catalyzes the hydrolysis of S-D-lactoyl-glutathione to form glutathione and D-lactic acid. This Acaryochloris marina (strain MBIC 11017) protein is Hydroxyacylglutathione hydrolase.